The primary structure comprises 262 residues: Cytochrome c oxidase subunit 3 (262 aa).

6 consecutive transmembrane segments (helical) span residues 39–59 (YDIS…YQWW), 83–103 (GMIL…WAFF), 120–140 (MGII…ILLA), 163–183 (GLFF…YEYI), 201–221 (ATGF…VCLL), and 240–260 (AWYW…IYWW).

Belongs to the cytochrome c oxidase subunit 3 family. Component of the cytochrome c oxidase (complex IV, CIV), a multisubunit enzyme composed of a catalytic core of 3 subunits and several supernumerary subunits. The complex exists as a monomer or a dimer and forms supercomplexes (SCs) in the inner mitochondrial membrane with ubiquinol-cytochrome c oxidoreductase (cytochrome b-c1 complex, complex III, CIII).

The protein localises to the mitochondrion inner membrane. It carries out the reaction 4 Fe(II)-[cytochrome c] + O2 + 8 H(+)(in) = 4 Fe(III)-[cytochrome c] + 2 H2O + 4 H(+)(out). Functionally, component of the cytochrome c oxidase, the last enzyme in the mitochondrial electron transport chain which drives oxidative phosphorylation. The respiratory chain contains 3 multisubunit complexes succinate dehydrogenase (complex II, CII), ubiquinol-cytochrome c oxidoreductase (cytochrome b-c1 complex, complex III, CIII) and cytochrome c oxidase (complex IV, CIV), that cooperate to transfer electrons derived from NADH and succinate to molecular oxygen, creating an electrochemical gradient over the inner membrane that drives transmembrane transport and the ATP synthase. Cytochrome c oxidase is the component of the respiratory chain that catalyzes the reduction of oxygen to water. Electrons originating from reduced cytochrome c in the intermembrane space (IMS) are transferred via the dinuclear copper A center (CU(A)) of subunit 2 and heme A of subunit 1 to the active site in subunit 1, a binuclear center (BNC) formed by heme A3 and copper B (CU(B)). The BNC reduces molecular oxygen to 2 water molecules using 4 electrons from cytochrome c in the IMS and 4 protons from the mitochondrial matrix. This is Cytochrome c oxidase subunit 3 (mt:CoIII) from Drosophila yakuba (Fruit fly).